The chain runs to 218 residues: GILT-like protein ZK669.3 (218 aa).

The first 21 residues, 1-21, serve as a signal peptide directing secretion; that stretch reads MRRLNGVFICLILFITKISYA. Residues asparagine 129 and asparagine 185 are each glycosylated (N-linked (GlcNAc...) asparagine).

The protein belongs to the GILT family.

Its subcellular location is the secreted. The polypeptide is GILT-like protein ZK669.3 (Caenorhabditis elegans).